Consider the following 306-residue polypeptide: Ribosomal protein L11 methyltransferase (306 aa).

4 residues coordinate S-adenosyl-L-methionine: T152, G179, D201, and N243.

The protein belongs to the methyltransferase superfamily. PrmA family.

The protein resides in the cytoplasm. It catalyses the reaction L-lysyl-[protein] + 3 S-adenosyl-L-methionine = N(6),N(6),N(6)-trimethyl-L-lysyl-[protein] + 3 S-adenosyl-L-homocysteine + 3 H(+). In terms of biological role, methylates ribosomal protein L11. In Geobacter sp. (strain M21), this protein is Ribosomal protein L11 methyltransferase.